A 273-amino-acid chain; its full sequence is Putative pyruvate, phosphate dikinase regulatory protein (273 aa).

Residue 149–156 (GPSRTSKT) coordinates ADP.

Belongs to the pyruvate, phosphate/water dikinase regulatory protein family. PDRP subfamily.

It catalyses the reaction N(tele)-phospho-L-histidyl/L-threonyl-[pyruvate, phosphate dikinase] + ADP = N(tele)-phospho-L-histidyl/O-phospho-L-threonyl-[pyruvate, phosphate dikinase] + AMP + H(+). The catalysed reaction is N(tele)-phospho-L-histidyl/O-phospho-L-threonyl-[pyruvate, phosphate dikinase] + phosphate + H(+) = N(tele)-phospho-L-histidyl/L-threonyl-[pyruvate, phosphate dikinase] + diphosphate. Functionally, bifunctional serine/threonine kinase and phosphorylase involved in the regulation of the pyruvate, phosphate dikinase (PPDK) by catalyzing its phosphorylation/dephosphorylation. This is Putative pyruvate, phosphate dikinase regulatory protein from Rickettsia africae (strain ESF-5).